The chain runs to 479 residues: Anaerobic nitric oxide reductase flavorubredoxin (479 aa).

The zinc metallo-hydrolase stretch occupies residues 30–210; sequence LRGSSYNSYL…PFSRLVTPKI (181 aa). Histidine 79, glutamate 81, aspartate 83, histidine 147, aspartate 166, and histidine 227 together coordinate Fe cation. One can recognise a Flavodoxin-like domain in the interval 254 to 393; sequence ITIFYDTMSN…LCRQHGRDIA (140 aa). FMN is bound by residues 260 to 264 and 342 to 369; these read TMSNN and AFGS…EMSL. Positions 423 to 474 constitute a Rubredoxin-like domain; it reads GPKMQCSVCQWIYDPALGEPLQDVAPGTPWSDVPDNFLCPECSLGKDVFDVL. Residues cysteine 428, cysteine 431, cysteine 461, and cysteine 464 each contribute to the Fe cation site.

In the N-terminal section; belongs to the zinc metallo-hydrolase group 3 family. In terms of assembly, homotetramer. It depends on Fe cation as a cofactor. FMN is required as a cofactor.

Its subcellular location is the cytoplasm. It participates in nitrogen metabolism; nitric oxide reduction. Functionally, anaerobic nitric oxide reductase; uses NADH to detoxify nitric oxide (NO), protecting several 4Fe-4S NO-sensitive enzymes. Has at least 2 reductase partners, only one of which (NorW, flavorubredoxin reductase) has been identified. NO probably binds to the di-iron center; electrons enter from the NorW at rubredoxin and are transferred sequentially to the FMN center and the di-iron center. Also able to function as an aerobic oxygen reductase. The protein is Anaerobic nitric oxide reductase flavorubredoxin of Salmonella arizonae (strain ATCC BAA-731 / CDC346-86 / RSK2980).